The following is a 285-amino-acid chain: Polyamine aminopropyltransferase (285 aa).

The 237-residue stretch at 5-241 (DTWFTEHFQT…GWWSVTLSSK (237 aa)) folds into the PABS domain. Gln35 contacts S-methyl-5'-thioadenosine. 2 residues coordinate spermidine: His66 and Asp90. S-methyl-5'-thioadenosine contacts are provided by residues Asp110 and 141 to 142 (DG). Catalysis depends on Asp160, which acts as the Proton acceptor. 160–163 (DSTD) is a spermidine binding site. Pro167 is a binding site for S-methyl-5'-thioadenosine.

Belongs to the spermidine/spermine synthase family. As to quaternary structure, homodimer or homotetramer.

It is found in the cytoplasm. It catalyses the reaction S-adenosyl 3-(methylsulfanyl)propylamine + putrescine = S-methyl-5'-thioadenosine + spermidine + H(+). It participates in amine and polyamine biosynthesis; spermidine biosynthesis; spermidine from putrescine: step 1/1. Its function is as follows. Catalyzes the irreversible transfer of a propylamine group from the amino donor S-adenosylmethioninamine (decarboxy-AdoMet) to putrescine (1,4-diaminobutane) to yield spermidine. The polypeptide is Polyamine aminopropyltransferase (Xylella fastidiosa (strain Temecula1 / ATCC 700964)).